A 169-amino-acid chain; its full sequence is S-ribosylhomocysteine lyase (169 aa).

Positions 54, 58, and 128 each coordinate Fe cation.

The protein belongs to the LuxS family. Homodimer. It depends on Fe cation as a cofactor.

The catalysed reaction is S-(5-deoxy-D-ribos-5-yl)-L-homocysteine = (S)-4,5-dihydroxypentane-2,3-dione + L-homocysteine. Involved in the synthesis of autoinducer 2 (AI-2) which is secreted by bacteria and is used to communicate both the cell density and the metabolic potential of the environment. The regulation of gene expression in response to changes in cell density is called quorum sensing. Catalyzes the transformation of S-ribosylhomocysteine (RHC) to homocysteine (HC) and 4,5-dihydroxy-2,3-pentadione (DPD). The polypeptide is S-ribosylhomocysteine lyase (Shewanella frigidimarina (strain NCIMB 400)).